The primary structure comprises 256 residues: ATP synthase peripheral stalk subunit b, mitochondrial (256 aa).

The N-terminal 42 residues, 1–42, are a transit peptide targeting the mitochondrion; that stretch reads MLSRVVLSAAATAAPCLKNAAVLGPGVLQATRVFHTGQPRLA. An N6-succinyllysine modification is found at lysine 131. Residues lysine 139, lysine 154, lysine 162, lysine 221, lysine 233, and lysine 244 each carry the N6-acetyllysine modification.

It belongs to the eukaryotic ATPase B chain family. Component of the ATP synthase complex composed at least of ATP5F1A/subunit alpha, ATP5F1B/subunit beta, ATP5MC1/subunit c (homooctomer), MT-ATP6/subunit a, MT-ATP8/subunit 8, ATP5ME/subunit e, ATP5MF/subunit f, ATP5MG/subunit g, ATP5MK/subunit k, ATP5MJ/subunit j, ATP5F1C/subunit gamma, ATP5F1D/subunit delta, ATP5F1E/subunit epsilon, ATP5PF/subunit F6, ATP5PB/subunit b, ATP5PD/subunit d, ATP5PO/subunit OSCP. ATP synthase complex consists of a soluble F(1) head domain (subunits alpha(3) and beta(3)) - the catalytic core - and a membrane F(0) domain - the membrane proton channel (subunits c, a, 8, e, f, g, k and j). These two domains are linked by a central stalk (subunits gamma, delta, and epsilon) rotating inside the F1 region and a stationary peripheral stalk (subunits F6, b, d, and OSCP).

It localises to the mitochondrion. The protein resides in the mitochondrion inner membrane. In terms of biological role, subunit b, of the mitochondrial membrane ATP synthase complex (F(1)F(0) ATP synthase or Complex V) that produces ATP from ADP in the presence of a proton gradient across the membrane which is generated by electron transport complexes of the respiratory chain. ATP synthase complex consist of a soluble F(1) head domain - the catalytic core - and a membrane F(1) domain - the membrane proton channel. These two domains are linked by a central stalk rotating inside the F(1) region and a stationary peripheral stalk. During catalysis, ATP synthesis in the catalytic domain of F(1) is coupled via a rotary mechanism of the central stalk subunits to proton translocation. In vivo, can only synthesize ATP although its ATP hydrolase activity can be activated artificially in vitro. Part of the complex F(0) domain. Part of the complex F(0) domain and the peripheric stalk, which acts as a stator to hold the catalytic alpha(3)beta(3) subcomplex and subunit a/ATP6 static relative to the rotary elements. The chain is ATP synthase peripheral stalk subunit b, mitochondrial from Rattus norvegicus (Rat).